A 156-amino-acid polypeptide reads, in one-letter code: Oxidized purine nucleoside triphosphate hydrolase (156 aa).

The region spanning 3 to 132 (TSRLYTLVLV…WFPLLLQKKK (130 aa)) is the Nudix hydrolase domain. Residue threonine 8 coordinates 2-oxo-dATP. 8-oxo-dGTP-binding positions include threonine 8, lysine 23, asparagine 33, 35–38 (FGGK), and glutamate 52. 2-oxo-dATP contacts are provided by residues asparagine 33 and 35-38 (FGGK). Mg(2+) is bound by residues glycine 36, glutamate 52, glutamate 55, glutamate 56, and glutamate 100. Positions 37–58 (GKVQEGETIEDGAKRELLEESG) match the Nudix box motif. 8-oxo-dGTP-binding positions include glutamate 56, glutamate 100, and 117 to 120 (WPDD). Position 117–120 (117–120 (WPDD)) interacts with 2-oxo-dATP.

The protein belongs to the Nudix hydrolase family. In terms of assembly, monomer. Mg(2+) is required as a cofactor. High expression levels detected in thymus, liver, spleen, kidney, testis and large intestine, with lower levels detected in brain, heart, lung and stomach (at protein level). Expressed in kidney, liver and small intestine.

Its subcellular location is the cytoplasm. The protein localises to the nucleus. It localises to the nucleus membrane. It is found in the cytoplasmic vesicle. The protein resides in the secretory vesicle. Its subcellular location is the acrosome. It carries out the reaction 2-oxo-dATP + H2O = 2-oxo-dAMP + diphosphate + H(+). It catalyses the reaction 2-oxo-ATP + H2O = 2-oxo-AMP + diphosphate + H(+). The catalysed reaction is 8-oxo-dGTP + H2O = 8-oxo-dGMP + diphosphate + H(+). The enzyme catalyses 8-oxo-dATP + H2O = 8-oxo-dAMP + diphosphate + H(+). It carries out the reaction O(6)-methyl-dGTP + H2O = O(6)-methyl-dGMP + diphosphate + H(+). It catalyses the reaction N(6)-methyl-dATP + H2O = N(6)-methyl-dAMP + diphosphate + H(+). The catalysed reaction is N(6)-methyl-ATP + H2O = N(6)-methyl-AMP + diphosphate + H(+). In terms of biological role, oxidized purine nucleoside triphosphate hydrolase which is a prominent sanitizer of the oxidized nucleotide pool. Catalyzes the hydrolysis of 2-oxo-dATP (2-hydroxy-dATP) into 2-oxo-dAMP. Also has a significant hydrolase activity toward 2-oxo-ATP, 8-oxo-dGTP and 8-oxo-dATP. Through the hydrolysis of oxidized purine nucleoside triphosphates, prevents their incorporation into DNA and the subsequent transversions A:T to C:G and G:C to T:A. Also catalyzes the hydrolysis of methylated purine nucleoside triphosphate preventing their integration into DNA. Through this antimutagenic activity protects cells from oxidative stress. The protein is Oxidized purine nucleoside triphosphate hydrolase (Nudt1) of Mus musculus (Mouse).